The sequence spans 393 residues: S-adenosylmethionine synthase (393 aa).

Residue H17 participates in ATP binding. D19 provides a ligand contact to Mg(2+). E45 serves as a coordination point for K(+). L-methionine-binding residues include E58 and Q106. Positions 106–116 (QSAHIAQGVDA) are flexible loop. ATP-binding positions include 171–173 (DAK), 237–238 (KF), D246, 252–253 (RK), A269, and K273. D246 is a binding site for L-methionine. Residue K277 participates in L-methionine binding.

Belongs to the AdoMet synthase family. In terms of assembly, homotetramer; dimer of dimers. Requires Mg(2+) as cofactor. The cofactor is K(+).

It localises to the cytoplasm. The catalysed reaction is L-methionine + ATP + H2O = S-adenosyl-L-methionine + phosphate + diphosphate. It participates in amino-acid biosynthesis; S-adenosyl-L-methionine biosynthesis; S-adenosyl-L-methionine from L-methionine: step 1/1. Functionally, catalyzes the formation of S-adenosylmethionine (AdoMet) from methionine and ATP. The overall synthetic reaction is composed of two sequential steps, AdoMet formation and the subsequent tripolyphosphate hydrolysis which occurs prior to release of AdoMet from the enzyme. This Jannaschia sp. (strain CCS1) protein is S-adenosylmethionine synthase.